We begin with the raw amino-acid sequence, 88 residues long: Cell division topological specificity factor (88 aa).

This sequence belongs to the MinE family.

Functionally, prevents the cell division inhibition by proteins MinC and MinD at internal division sites while permitting inhibition at polar sites. This ensures cell division at the proper site by restricting the formation of a division septum at the midpoint of the long axis of the cell. This chain is Cell division topological specificity factor, found in Escherichia fergusonii (strain ATCC 35469 / DSM 13698 / CCUG 18766 / IAM 14443 / JCM 21226 / LMG 7866 / NBRC 102419 / NCTC 12128 / CDC 0568-73).